Consider the following 869-residue polypeptide: Phenylalanine--tRNA ligase beta subunit (869 aa).

The 122-residue stretch at 41-162 folds into the tRNA-binding domain; that stretch reads SQVTGPIVVG…QYGFSEAEYE (122 aa). One can recognise a B5 domain in the interval 443–519; it reads PRAKAIHFKA…RLVGYDQIPI (77 aa). D497, D503, E506, and E507 together coordinate Mg(2+). One can recognise an FDX-ACB domain in the interval 776–868; it reads STFPPVKQDL…EAAEIGAQLR (93 aa).

Belongs to the phenylalanyl-tRNA synthetase beta subunit family. Type 1 subfamily. In terms of assembly, tetramer of two alpha and two beta subunits. The cofactor is Mg(2+).

It localises to the cytoplasm. It carries out the reaction tRNA(Phe) + L-phenylalanine + ATP = L-phenylalanyl-tRNA(Phe) + AMP + diphosphate + H(+). The polypeptide is Phenylalanine--tRNA ligase beta subunit (Bifidobacterium longum (strain NCC 2705)).